Consider the following 122-residue polypeptide: uncharacterized protein (122 aa).

The next 2 helical transmembrane spans lie at 9 to 29 (VATV…STWV) and 60 to 80 (LFSF…CLIM).

The protein localises to the cytoplasm. It localises to the membrane. This is an uncharacterized protein from Schizosaccharomyces pombe (strain 972 / ATCC 24843) (Fission yeast).